The sequence spans 919 residues: Transcriptional regulatory protein EDS1 (919 aa).

The segment at 1–54 is disordered; the sequence is MSHHVPNLYGTPIRDPHERKRNSASMGEVNQSVSSRNCERGSEKGTKQRKKASH. Positions 23 to 36 are enriched in polar residues; that stretch reads SASMGEVNQSVSSR. A compositionally biased stretch (basic and acidic residues) spans 37 to 46; the sequence is NCERGSEKGT. Residues 56–85 constitute a DNA-binding region (zn(2)-C6 fungal-type); it reads CDQCRRKRIKCRFDKHTGVCQGCLEVGEKC. The interval 297–338 is disordered; that stretch reads AGFPNKKLGTDGRSDKWDKNSTWKPVYRSSNPSHPSTEKNVS. Over residues 304–317 the composition is skewed to basic and acidic residues; it reads LGTDGRSDKWDKNS. Over residues 318–338 the composition is skewed to polar residues; sequence TWKPVYRSSNPSHPSTEKNVS.

This sequence belongs to the EDS1/RGT1 family. As to quaternary structure, binds DNA in a sequence-specific manner.

It localises to the nucleus. In Saccharomyces cerevisiae (strain ATCC 204508 / S288c) (Baker's yeast), this protein is Transcriptional regulatory protein EDS1 (EDS1).